We begin with the raw amino-acid sequence, 113 residues long: ATP-dependent Clp protease adapter protein ClpS (113 aa).

The span at 1 to 11 shows a compositional bias: basic and acidic residues; sequence MHRDLHMMSDR. Residues 1–25 are disordered; sequence MHRDLHMMSDRSEDDGDTSILTATK.

It belongs to the ClpS family. Binds to the N-terminal domain of the chaperone ClpA.

Functionally, involved in the modulation of the specificity of the ClpAP-mediated ATP-dependent protein degradation. In Roseobacter denitrificans (strain ATCC 33942 / OCh 114) (Erythrobacter sp. (strain OCh 114)), this protein is ATP-dependent Clp protease adapter protein ClpS.